We begin with the raw amino-acid sequence, 488 residues long: Histamine H1 receptor (488 aa).

Residues Met-1–Pro-29 lie on the Extracellular side of the membrane. N-linked (GlcNAc...) asparagine glycans are attached at residues Asn-5 and Asn-18. A helical transmembrane segment spans residues Leu-30 to Tyr-50. The Cytoplasmic segment spans residues Ala-51 to Leu-64. A helical transmembrane segment spans residues Tyr-65 to Ile-89. Residues Met-90–Arg-97 lie on the Extracellular side of the membrane. The chain crosses the membrane as a helical span at residues Pro-98–Ile-123. An intrachain disulfide couples Cys-100 to Cys-180. Asp-107 and Thr-112 together coordinate histamine. Positions Asp-107–Thr-112 are important for agonist binding. Topologically, residues Asp-124 to Ala-144 are cytoplasmic. Phosphothreonine is present on residues Thr-140 and Thr-142. Residues Ser-145–Gly-164 form a helical membrane-spanning segment. The Extracellular portion of the chain corresponds to Trp-165–Thr-188. Residues Trp-189–Val-211 traverse the membrane as a helical segment. Residue Asn-198 coordinates histamine. The Cytoplasmic segment spans residues Lys-212–Gln-417. The residue at position 230 (Ser-230) is a Phosphoserine. Residues Lys-245–Leu-337 are disordered. Residues Ala-322 to Leu-337 show a composition bias toward polar residues. Phosphoserine is present on residues Ser-344, Ser-347, Ser-381, Ser-383, Ser-397, and Ser-399. Residues Leu-418–Phe-441 traverse the membrane as a helical segment. The tract at residues Phe-425–Trp-429 is important for agonist binding. Tyr-432 is a histamine binding site. Cys-442 and Cys-445 form a disulfide bridge. Topologically, residues Cys-442–Ser-447 are extracellular. The helical transmembrane segment at Glu-448 to Pro-470 threads the bilayer. The Cytoplasmic segment spans residues Leu-471–Ser-488.

The protein belongs to the G-protein coupled receptor 1 family. In terms of processing, phosphorylation at sites in the second and third cytoplasmic loops independently contribute to agonist-induced receptor down-regulation.

The protein resides in the cell membrane. In terms of biological role, G-protein-coupled receptor for histamine, a biogenic amine that functions as an immune modulator and a neurotransmitter. Through the H1 receptor, histamine mediates the contraction of smooth muscles and increases capillary permeability due to contraction of terminal venules. Also mediates neurotransmission in the central nervous system and thereby regulates circadian rhythms, emotional and locomotor activities as well as cognitive functions. The chain is Histamine H1 receptor from Mus musculus (Mouse).